We begin with the raw amino-acid sequence, 652 residues long: Zinc finger protein 432 (652 aa).

A KRAB domain is found at 8–79 (LTLEDVTVEF…EDERHSRICP (72 aa)). Tyr-41 is subject to 3'-nitrotyrosine. Ser-139 and Ser-164 each carry ADP-ribosylserine. C2H2-type zinc fingers lie at residues 205–227 (HVCSECGKAFVKKSQLTDHERVH), 233–255 (YGCTLCAKVFSRKSRLNEHQRIH), 261–283 (FICSECGKVFTMKSRLIEHQRTH), 289–311 (YICNECGKGFPGKRNLIVHQRNH), 317–339 (YICSECGKGFTGKSMLIIHQRTH), 345–367 (YICSECGKGFTTKHYVIIHQRNH), 373–395 (YICNECGKGFTMKSRMIEHQRTH), 401–423 (YICSECGKGFPRKSNLIVHQRNH), 429–451 (YLCSECGKGFTVKSMLIIHQRTH), 457–479 (YTCSECGKGFPLKSRLIVHQRTH), 485–507 (YRCSECGKGFIVNSGLMLHQRTH), 513–535 (YICNECGKGFAFKSNLVVHQRTH), 541–563 (FMCSECGKGFTMKRYLIVHQQIH), 567–591 (KSCICSECGRGFAKETELALHKQVH), 597–619 (YGCNECGKGFTMKSRLIVHQRTH), and 625–647 (FVCSECRKAFSSKRNLIVHQRTH). Ser-246 carries the ADP-ribosylserine modification. The residue at position 330 (Ser-330) is an ADP-ribosylserine. Ser-414 is modified (ADP-ribosylserine).

It belongs to the krueppel C2H2-type zinc-finger protein family. As to quaternary structure, interacts with PARP1 and several chromatin remodeling proteins; the interaction with PARP1 reshapes ZNF432 interacting proteins. Interacts with TRIM28; the interaction is independent of PARP1.

The protein resides in the nucleus. In terms of biological role, homologous recombination repressor that functions as a poly(ADP-ribose) (PAR) reader regulating DNA damage response and PARP inhibition. Once recruited to DNA lesions via DNA-, in a PAR-dependent mechanism, stimulates PARP1 activity. Binds preferentially ssDNA and inhibits EXO1-mediated resection, probably through a PAR-independent DNA-binding mechanism. The chain is Zinc finger protein 432 from Homo sapiens (Human).